Consider the following 440-residue polypeptide: Alpha-methylserine aldolase (440 aa).

Lys-255 bears the N6-(pyridoxal phosphate)lysine mark.

The protein belongs to the SHMT family. Alpha-methylserine aldolase subfamily. In terms of assembly, homodimer. Pyridoxal 5'-phosphate serves as cofactor.

The catalysed reaction is 2-methyl-L-serine = formaldehyde + L-alanine. It carries out the reaction 2-ethyl-L-serine = (2S)-2-aminobutanoate + formaldehyde. In the alpha-methyl-L-serine synthesis reaction, activity is inhibited by an excess amount of formaldehyde (at a concentration greater than 4 mM). Formaldehyde release activity is reduced by the sulfhydryl reagent N-ethylmaleimide, iodoacetate amide and iodoacetic acid, but not by dithiothreitol and 2-mercaptoethanol. Activity is enhanced by 1 mM of manganese chloride. Functionally, catalyzes the reversible interconversion of alpha-methyl-L-serine to L-alanine and formaldehyde. Can also catalyze the synthesis of alpha-ethyl-L-serine from L-2-aminobutyric acid and formaldehyde. Also shows low alanine racemase activity. Cannot use alpha-methyl-D-serine, L-serine, D-serine, (S)-2-amino-1-propanol, (R)-2-amino-1-propanol, (S)-alpha-hydroxymethyltyrosine, (R)-alpha-hydroxymethyltyrosine, alpha-iso-butyl-DL-serine, alpha-iso-propyl-DL-serine or alpha-benzyl-DL-serine. Cannot use D-alanine instead of L-alanine as the substrate for alpha-methyl-L-serine synthesis. Does not require tetrahydrofolate (THF) for activity. The protein is Alpha-methylserine aldolase of Variovorax paradoxus.